The chain runs to 704 residues: Matrix metalloproteinase-9 (704 aa).

The signal sequence occupies residues 1–19; sequence MSPRQPLVLVFLVLGCCSA. Positions 20–106 are cleaved as a propeptide — activation peptide; that stretch reads APRPHKPTVV…PRCGVPDLGK (87 aa). Residue asparagine 38 is glycosylated (N-linked (GlcNAc...) asparagine). A Cysteine switch motif is present at residues 97 to 104; sequence PRCGVPDL. Cysteine 99 lines the Zn(2+) pocket. N-linked (GlcNAc...) asparagine glycosylation is present at asparagine 127. Positions 131 and 165 each coordinate Ca(2+). Zn(2+) contacts are provided by histidine 175 and aspartate 177. Positions 182, 183, 185, and 187 each coordinate Ca(2+). Histidine 190 contributes to the Zn(2+) binding site. Positions 197, 199, and 201 each coordinate Ca(2+). Histidine 203 is a binding site for Zn(2+). Ca(2+) is bound by residues aspartate 205, aspartate 206, and glutamate 208. Fibronectin type-II domains follow at residues 225-273, 283-331, and 342-390; these read ADGA…FCPS, GDGK…FCPT, and SAGE…FCPD. 6 disulfides stabilise this stretch: cysteine 230–cysteine 256, cysteine 244–cysteine 271, cysteine 288–cysteine 314, cysteine 302–cysteine 329, cysteine 347–cysteine 373, and cysteine 361–cysteine 388. Residue histidine 401 participates in Zn(2+) binding. Glutamate 402 is a catalytic residue. Residues histidine 405 and histidine 411 each coordinate Zn(2+). Positions 434–507 are disordered; the sequence is DDVRGIQHLY…PSEAPTVPVD (74 aa). Pro residues-rich tracts occupy residues 450 to 461 and 483 to 496; these read EPQPPTAPPTAP and TGPP…PPTA. Cysteine 513 and cysteine 701 are oxidised to a cystine. Hemopexin repeat units follow at residues 515–560, 561–605, 607–654, and 655–701; these read VNIF…WPAL, PRKL…GLGP, VTQV…YPGV, and PLNT…ILQC.

Belongs to the peptidase M10A family. Exists as monomer or homodimer; disulfide-linked. Also exists as heterodimer with LCN2. Macrophages and transformed cell lines produce only the monomeric form. Interacts with ECM1. The cofactor is Zn(2+). Requires Ca(2+) as cofactor. In terms of processing, N- and O-glycosylated.

Its subcellular location is the secreted. The protein resides in the extracellular space. The protein localises to the extracellular matrix. The enzyme catalyses Cleavage of gelatin types I and V and collagen types IV and V.. Matrix metalloproteinase that plays an essential role in local proteolysis of the extracellular matrix and in leukocyte migration. Could play a role in bone osteoclastic resorption. Cleaves KiSS1 at a Gly-|-Leu bond. Cleaves NINJ1 to generate the Secreted ninjurin-1 form. Cleaves type IV and type V collagen into large C-terminal three quarter fragments and shorter N-terminal one quarter fragments. Degrades fibronectin but not laminin or Pz-peptide. This is Matrix metalloproteinase-9 (MMP9) from Canis lupus familiaris (Dog).